Here is a 249-residue protein sequence, read N- to C-terminus: Methylthioribulose-1-phosphate dehydratase (249 aa).

His-103 and His-105 together coordinate Zn(2+).

It belongs to the aldolase class II family. MtnB subfamily. It depends on Zn(2+) as a cofactor.

The enzyme catalyses 5-(methylsulfanyl)-D-ribulose 1-phosphate = 5-methylsulfanyl-2,3-dioxopentyl phosphate + H2O. It participates in amino-acid biosynthesis; L-methionine biosynthesis via salvage pathway; L-methionine from S-methyl-5-thio-alpha-D-ribose 1-phosphate: step 2/6. Functionally, catalyzes the dehydration of methylthioribulose-1-phosphate (MTRu-1-P) into 2,3-diketo-5-methylthiopentyl-1-phosphate (DK-MTP-1-P). The protein is Methylthioribulose-1-phosphate dehydratase of Leptospira interrogans serogroup Icterohaemorrhagiae serovar copenhageni (strain Fiocruz L1-130).